The chain runs to 207 residues: Glycerol-3-phosphate acyltransferase 1 (207 aa).

5 helical membrane passes run 3–23 (YVIASLLGYIFGCIHGSQIVG), 53–73 (IVVALIDIFKATAAIFLLLIL), 85–105 (HIYIYLTALFVIIGHNYPITM), 127–147 (IALIGIGVLILFTIATDYLAV), and 154–174 (ISFLITTYYIFGLAPFFIVVG).

It belongs to the PlsY family. As to quaternary structure, probably interacts with PlsX.

Its subcellular location is the cell membrane. The catalysed reaction is an acyl phosphate + sn-glycerol 3-phosphate = a 1-acyl-sn-glycero-3-phosphate + phosphate. The protein operates within lipid metabolism; phospholipid metabolism. Its function is as follows. Catalyzes the transfer of an acyl group from acyl-phosphate (acyl-PO(4)) to glycerol-3-phosphate (G3P) to form lysophosphatidic acid (LPA). This enzyme utilizes acyl-phosphate as fatty acyl donor, but not acyl-CoA or acyl-ACP. This is Glycerol-3-phosphate acyltransferase 1 from Oceanobacillus iheyensis (strain DSM 14371 / CIP 107618 / JCM 11309 / KCTC 3954 / HTE831).